A 43-amino-acid chain; its full sequence is METATIIVIFVSSLLLGITTYSVYTAFGPASKNLRDPFEEHED.

The chain crosses the membrane as a helical span at residues 7 to 29; that stretch reads IVIFVSSLLLGITTYSVYTAFGP.

The protein belongs to the PsbN family.

It is found in the plastid. The protein localises to the chloroplast thylakoid membrane. In terms of biological role, may play a role in photosystem I and II biogenesis. The polypeptide is Protein PsbN (Phaeodactylum tricornutum (strain CCAP 1055/1)).